The following is a 165-amino-acid chain: MRILGIDPGLRTLGWGVIEQRGSRLSHVANGLCHSDGDDLGERLLSLHNQIVEVIEEYRPDQAAIEQTFVNKDGAGTLKLGQARGVALLTLAQAGLPVGEYAPNRVKKTVVGVGHAEKEQVIHMVKLQLPGCLPKGADAADALAIAICHAYYGSAQALSQREVRA.

Active-site residues include D7, E66, and D138. Residues D7, E66, and D138 each contribute to the Mg(2+) site.

Belongs to the RuvC family. In terms of assembly, homodimer which binds Holliday junction (HJ) DNA. The HJ becomes 2-fold symmetrical on binding to RuvC with unstacked arms; it has a different conformation from HJ DNA in complex with RuvA. In the full resolvosome a probable DNA-RuvA(4)-RuvB(12)-RuvC(2) complex forms which resolves the HJ. It depends on Mg(2+) as a cofactor.

It is found in the cytoplasm. It carries out the reaction Endonucleolytic cleavage at a junction such as a reciprocal single-stranded crossover between two homologous DNA duplexes (Holliday junction).. In terms of biological role, the RuvA-RuvB-RuvC complex processes Holliday junction (HJ) DNA during genetic recombination and DNA repair. Endonuclease that resolves HJ intermediates. Cleaves cruciform DNA by making single-stranded nicks across the HJ at symmetrical positions within the homologous arms, yielding a 5'-phosphate and a 3'-hydroxyl group; requires a central core of homology in the junction. The consensus cleavage sequence is 5'-(A/T)TT(C/G)-3'. Cleavage occurs on the 3'-side of the TT dinucleotide at the point of strand exchange. HJ branch migration catalyzed by RuvA-RuvB allows RuvC to scan DNA until it finds its consensus sequence, where it cleaves and resolves the cruciform DNA. This chain is Crossover junction endodeoxyribonuclease RuvC, found in Ruegeria pomeroyi (strain ATCC 700808 / DSM 15171 / DSS-3) (Silicibacter pomeroyi).